We begin with the raw amino-acid sequence, 582 residues long: V-type ATP synthase alpha chain (582 aa).

231-238 (GPFGSGKT) is a binding site for ATP.

It belongs to the ATPase alpha/beta chains family.

It catalyses the reaction ATP + H2O + 4 H(+)(in) = ADP + phosphate + 5 H(+)(out). In terms of biological role, produces ATP from ADP in the presence of a proton gradient across the membrane. The V-type alpha chain is a catalytic subunit. This chain is V-type ATP synthase alpha chain, found in Deinococcus deserti (strain DSM 17065 / CIP 109153 / LMG 22923 / VCD115).